The sequence spans 656 residues: Pyoverdine export ATP-binding/permease protein PvdT (656 aa).

Residues 6–245 (IDLRAIRKSY…SANPAALQAV (240 aa)) enclose the ABC transporter domain. 43 to 50 (GASGSGKS) contacts ATP. 4 consecutive transmembrane segments (helical) span residues 284 to 304 (ALTL…LAVG), 538 to 558 (IAAI…LMTV), 589 to 609 (LSVV…AALL), and 619 to 639 (VPAV…FGFM).

Belongs to the ABC transporter superfamily. Macrolide exporter (TC 3.A.1.122) family. Part of the tripartite efflux system PvdRT-OpmQ, which is composed of an inner membrane component with both ATPase and permease domains, PvdT, a periplasmic membrane fusion protein, PvdR, and an outer membrane component, OpmQ.

It is found in the cell inner membrane. Functionally, part of the tripartite efflux system PvdRT-OpmQ required for the secretion into the extracellular milieu of the siderophore pyoverdine (PVD), which is involved in iron acquisition. This subunit binds PVD and drives its secretion by hydrolyzing ATP. The system is responsible for export of newly synthesized PVD after the final steps of biosynthesis have taken place in the periplasm. It is also responsible for recycling of PVD after internalization of ferri-PVD into the periplasm by the outer-membrane receptor FpvA and release of iron from PVD, thus making PVD available for new cycles of iron uptake. The chain is Pyoverdine export ATP-binding/permease protein PvdT from Pseudomonas savastanoi pv. phaseolicola (strain 1448A / Race 6) (Pseudomonas syringae pv. phaseolicola (strain 1448A / Race 6)).